A 186-amino-acid chain; its full sequence is ATP synthase subunit b (186 aa).

A helical transmembrane segment spans residues 28–48 (IVWSIIPFAVILFVFAKVVLP).

It belongs to the ATPase B chain family. As to quaternary structure, F-type ATPases have 2 components, F(1) - the catalytic core - and F(0) - the membrane proton channel. F(1) has five subunits: alpha(3), beta(3), gamma(1), delta(1), epsilon(1). F(0) has three main subunits: a(1), b(2) and c(10-14). The alpha and beta chains form an alternating ring which encloses part of the gamma chain. F(1) is attached to F(0) by a central stalk formed by the gamma and epsilon chains, while a peripheral stalk is formed by the delta and b chains.

Its subcellular location is the cell membrane. Functionally, f(1)F(0) ATP synthase produces ATP from ADP in the presence of a proton or sodium gradient. F-type ATPases consist of two structural domains, F(1) containing the extramembraneous catalytic core and F(0) containing the membrane proton channel, linked together by a central stalk and a peripheral stalk. During catalysis, ATP synthesis in the catalytic domain of F(1) is coupled via a rotary mechanism of the central stalk subunits to proton translocation. Component of the F(0) channel, it forms part of the peripheral stalk, linking F(1) to F(0). This chain is ATP synthase subunit b, found in Corynebacterium urealyticum (strain ATCC 43042 / DSM 7109).